An 86-amino-acid chain; its full sequence is Protein Tat (86 aa).

A disordered region spans residues 1–21 (MDPVDPNLEPWNHPGSQPKTA). The segment at 1-24 (MDPVDPNLEPWNHPGSQPKTACNR) is interaction with human CREBBP. The tract at residues 1-48 (MDPVDPNLEPWNHPGSQPKTACNRCHCKKCCYHCQVCFITKGLGISYG) is transactivation. 3 residues coordinate Zn(2+): Cys22, Cys25, and Cys27. A cysteine-rich region spans residues 22-37 (CNRCHCKKCCYHCQVC). Lys28 is modified (N6-acetyllysine; by host PCAF). Residues Cys30, His33, Cys34, and Cys37 each contribute to the Zn(2+) site. Residues 38–48 (FITKGLGISYG) form a core region. Residues 47–86 (YGRKKRRQRRRPSQGGQTHQDPIPKQPSSQPRGNPTGPKE) form a disordered region. Residues 48–58 (GRKKRRQRRRP) are compositionally biased toward basic residues. The Nuclear localization signal, RNA-binding (TAR), and protein transduction signature appears at 49–57 (RKKRRQRRR). Residues 49–86 (RKKRRQRRRPSQGGQTHQDPIPKQPSSQPRGNPTGPKE) form an interaction with the host capping enzyme RNGTT region. Residues Lys50 and Lys51 each carry the N6-acetyllysine; by host EP300 and GCN5L2 modification. Arg52 and Arg53 each carry asymmetric dimethylarginine; by host PRMT6. The span at 60-79 (QGGQTHQDPIPKQPSSQPRG) shows a compositional bias: polar residues. Residue Lys71 forms a Glycyl lysine isopeptide (Lys-Gly) (interchain with G-Cter in ubiquitin) linkage.

The protein belongs to the lentiviruses Tat family. As to quaternary structure, interacts with host CCNT1. Associates with the P-TEFb complex composed at least of Tat, P-TEFb (CDK9 and CCNT1), TAR RNA, RNA Pol II. Recruits the HATs CREBBP, TAF1/TFIID, EP300, PCAF and GCN5L2. Interacts with host KAT5/Tip60; this interaction targets the latter to degradation. Interacts with the host deacetylase SIRT1. Interacts with host capping enzyme RNGTT; this interaction stimulates RNGTT. Binds to host KDR, and to the host integrins ITGAV/ITGB3 and ITGA5/ITGB1. Interacts with host KPNB1/importin beta-1 without previous binding to KPNA1/importin alpha-1. Interacts with EIF2AK2. Interacts with host nucleosome assembly protein NAP1L1; this interaction may be required for the transport of Tat within the nucleus, since the two proteins interact at the nuclear rim. Interacts with host C1QBP/SF2P32; this interaction involves lysine-acetylated Tat. Interacts with the host chemokine receptors CCR2, CCR3 and CXCR4. Interacts with host DPP4/CD26; this interaction may trigger an anti-proliferative effect. Interacts with host LDLR. Interacts with the host extracellular matrix metalloproteinase MMP1. Interacts with host PRMT6; this interaction mediates Tat's methylation. Interacts with, and is ubiquitinated by MDM2/Hdm2. Interacts with host PSMC3 and HTATIP2. Interacts with STAB1; this interaction may overcome SATB1-mediated repression of IL2 and IL2RA (interleukin) in T cells by binding to the same domain than HDAC1. Interacts (when acetylated) with human CDK13, thereby increasing HIV-1 mRNA splicing and promoting the production of the doubly spliced HIV-1 protein Nef. Interacts with host TBP; this interaction modulates the activity of transcriptional pre-initiation complex. Interacts with host RELA. Interacts with host PLSCR1; this interaction negatively regulates Tat transactivation activity by altering its subcellular distribution. Asymmetrical arginine methylation by host PRMT6 seems to diminish the transactivation capacity of Tat and affects the interaction with host CCNT1. In terms of processing, acetylation by EP300, CREBBP, GCN5L2/GCN5 and PCAF regulates the transactivation activity of Tat. EP300-mediated acetylation of Lys-50 promotes dissociation of Tat from the TAR RNA through the competitive binding to PCAF's bromodomain. In addition, the non-acetylated Tat's N-terminus can also interact with PCAF. PCAF-mediated acetylation of Lys-28 enhances Tat's binding to CCNT1. Lys-50 is deacetylated by SIRT1. Post-translationally, polyubiquitination by host MDM2 does not target Tat to degradation, but activates its transactivation function and fosters interaction with CCNT1 and TAR RNA. Phosphorylated by EIF2AK2 on serine and threonine residues adjacent to the basic region important for TAR RNA binding and function. Phosphorylation of Tat by EIF2AK2 is dependent on the prior activation of EIF2AK2 by dsRNA.

It is found in the host nucleus. Its subcellular location is the host nucleolus. The protein resides in the host cytoplasm. The protein localises to the secreted. In terms of biological role, transcriptional activator that increases RNA Pol II processivity, thereby increasing the level of full-length viral transcripts. Recognizes a hairpin structure at the 5'-LTR of the nascent viral mRNAs referred to as the transactivation responsive RNA element (TAR) and recruits the cyclin T1-CDK9 complex (P-TEFb complex) that will in turn hyperphosphorylate the RNA polymerase II to allow efficient elongation. The CDK9 component of P-TEFb and other Tat-activated kinases hyperphosphorylate the C-terminus of RNA Pol II that becomes stabilized and much more processive. Other factors such as HTATSF1/Tat-SF1, SUPT5H/SPT5, and HTATIP2 are also important for Tat's function. Besides its effect on RNA Pol II processivity, Tat induces chromatin remodeling of proviral genes by recruiting the histone acetyltransferases (HATs) CREBBP, EP300 and PCAF to the chromatin. This also contributes to the increase in proviral transcription rate, especially when the provirus integrates in transcriptionally silent region of the host genome. To ensure maximal activation of the LTR, Tat mediates nuclear translocation of NF-kappa-B by interacting with host RELA. Through its interaction with host TBP, Tat may also modulate transcription initiation. Tat can reactivate a latently infected cell by penetrating in it and transactivating its LTR promoter. In the cytoplasm, Tat is thought to act as a translational activator of HIV-1 mRNAs. Functionally, extracellular circulating Tat can be endocytosed by surrounding uninfected cells via the binding to several surface receptors such as CD26, CXCR4, heparan sulfate proteoglycans (HSPG) or LDLR. Neurons are rarely infected, but they internalize Tat via their LDLR. Through its interaction with nuclear HATs, Tat is potentially able to control the acetylation-dependent cellular gene expression. Modulates the expression of many cellular genes involved in cell survival, proliferation or in coding for cytokines or cytokine receptors. Tat plays a role in T-cell and neurons apoptosis. Tat induced neurotoxicity and apoptosis probably contribute to neuroAIDS. Circulating Tat also acts as a chemokine-like and/or growth factor-like molecule that binds to specific receptors on the surface of the cells, affecting many cellular pathways. In the vascular system, Tat binds to ITGAV/ITGB3 and ITGA5/ITGB1 integrins dimers at the surface of endothelial cells and competes with bFGF for heparin-binding sites, leading to an excess of soluble bFGF. The polypeptide is Protein Tat (Homo sapiens (Human)).